Reading from the N-terminus, the 95-residue chain is Large ribosomal subunit protein bL25 (95 aa).

It belongs to the bacterial ribosomal protein bL25 family. As to quaternary structure, part of the 50S ribosomal subunit; part of the 5S rRNA/L5/L18/L25 subcomplex. Contacts the 5S rRNA. Binds to the 5S rRNA independently of L5 and L18.

Its function is as follows. This is one of the proteins that binds to the 5S RNA in the ribosome where it forms part of the central protuberance. This is Large ribosomal subunit protein bL25 from Shewanella oneidensis (strain ATCC 700550 / JCM 31522 / CIP 106686 / LMG 19005 / NCIMB 14063 / MR-1).